Reading from the N-terminus, the 1023-residue chain is 2-oxoglutarate dehydrogenase complex component E1 (1023 aa).

The N-terminal 40 residues, 1–40 (MFHLRTCAAKLRPLTASQTVKTFSQNRPAAARTFQQIRCY), are a transit peptide targeting the mitochondrion. K74 carries the post-translational modification N6-succinyllysine. A Phosphoserine modification is found at S100. H143, D156, and D158 together coordinate Ca(2+). Residue R312 participates in thiamine diphosphate binding. Residue K401 is modified to N6-acetyllysine. 3 residues coordinate thiamine diphosphate: D411, N444, and I446. D411, N444, and I446 together coordinate Mg(2+). K534 participates in a covalent cross-link: Glycyl lysine isopeptide (Lys-Gly) (interchain with G-Cter in ubiquitin). An N6-succinyllysine modification is found at K564. Q676 contributes to the thiamine diphosphate binding site. K970 is subject to N6-acetyllysine.

The protein belongs to the alpha-ketoglutarate dehydrogenase family. As to quaternary structure, homodimer. The 2-oxoglutarate dehydrogenase complex is composed of OGDH (2-oxoglutarate dehydrogenase; E1), DLST (dihydrolipoamide succinyltransferase; E2), DLD (dihydrolipoamide dehydrogenase; E3) and the assembly factor KGD4. It contains multiple copies of the three enzymatic components (E1, E2 and E3). In the nucleus, the 2-oxoglutarate dehydrogenase complex associates with KAT2A. Interacts with ABHD11; this interaction maintains the functional lipoylation of the 2-oxoglutarate dehydrogenase complex. Thiamine diphosphate is required as a cofactor. Requires Mg(2+) as cofactor.

It is found in the mitochondrion. Its subcellular location is the nucleus. The catalysed reaction is N(6)-[(R)-lipoyl]-L-lysyl-[protein] + 2-oxoglutarate + H(+) = N(6)-[(R)-S(8)-succinyldihydrolipoyl]-L-lysyl-[protein] + CO2. Calcium ions and ADP stimulate, whereas ATP and NADH reduce catalytic activity. In terms of biological role, 2-oxoglutarate dehydrogenase (E1o) component of the 2-oxoglutarate dehydrogenase complex (OGDHC). Participates in the first step, rate limiting for the overall conversion of 2-oxoglutarate to succinyl-CoA and CO(2) catalyzed by the whole OGDHC. Catalyzes the irreversible decarboxylation of 2-oxoglutarate (alpha-ketoglutarate) via the thiamine diphosphate (ThDP) cofactor and subsequent transfer of the decarboxylated acyl intermediate on an oxidized dihydrolipoyl group that is covalently amidated to the E2 enzyme (dihydrolipoyllysine-residue succinyltransferase or DLST). Plays a key role in the Krebs (citric acid) cycle, which is a common pathway for oxidation of fuel molecules, including carbohydrates, fatty acids, and amino acids. Can catalyze the decarboxylation of 2-oxoadipate in vitro, but at a much lower rate than 2-oxoglutarate. Mainly active in the mitochondrion. A fraction of the 2-oxoglutarate dehydrogenase complex also localizes in the nucleus and is required for lysine succinylation of histones: associates with KAT2A on chromatin and provides succinyl-CoA to histone succinyltransferase KAT2A. The sequence is that of 2-oxoglutarate dehydrogenase complex component E1 from Macaca fascicularis (Crab-eating macaque).